A 10061-amino-acid polypeptide reads, in one-letter code: MDCNFFEEDGSSSMNQTNGISKENVSEKVYSEDDKNTSCYVSYSSHSDDSYLDVEYENVHKSRDIENHINDNNKNMDNYNLGYCNFNDVMIDKNIECINKKELNCLKLKKNILNRSENYNNDIVSTEYSDNHTLYKNCSGTDDKNYSNNKDDKISDDHKCDKFVDDMDNNPNNHVSNNGDPKKCENLSPDNDTSNSIHKNNNTNINEKKNGEKKFIEGHFLSVINKFKRSLKENVIGKKIWNNNNSDITTIEPHTLQNEDSITDNNKSNKKSDNNNDKKNDDDNNNNNNNNNNNNNNNNNNDNHVCTSNNQPNTINKQNNLPSHKINDQNGRTKITPQNVNQKEKEIKNVVKEKNNFNREEKDITNSDDYDENSTDESCSYNPNITSSENSEEDCYEPSSDDKPSNNTSDHININDIRNDVPSNDNASSLNVKSAENCNKEKKKKKKKKKKELNNDNKDNTLNNETMNDINMNNKNDNTCFTIQESNKNCKNENFLILGNENEMKTSRINVPKIEIIKDEEPNRFFDNNDLKNKNINDHDNDNDDIDFIKMIKDKMKKSIYNNKDNKCISKKSNINKIENPVNNNNNNNNNNNNDINIFSNLSEQNILKKESNVCESYEGRKESNNTIHKIHCSKGKKNIMNLNNSSNTSSNFLSQHTLDDINKKYNVLSDVNLLKLIAHCSKSKNGEFPSMDDKIIEDFINMKKNSIKNEIKKHIIYICAKCRLEMKLSNNPYLCFECFINEMNAHTGKTVRMANGTDFNIKDVKVINSYISKFFVEVDKLKNKFEMDDEEIMLMFSEMRKSTLWNSEKNMCKLFFDIFKNYDIIDNNSIFSSNNKTRTDFLKQNYDIKIEEWNQNEDEKRLINNIINNEILSPGYIKELLKFYNFSKMKMKPKTNEQIEEIYLKPKSKKVNHYKNIRKKKYTVHKDICKIRTVCNSTCRINSCNYCSCIFDSIKCRFILISKMKNTKKLVYEKRINNSTISVEKMHEVKEIKIEQKDIFIHDDQKNSKDVPPSYNFGNSPIPNEEKPNVNKEGNIRIRNAINIFNKNKNNNNNNNDKNDKNDKNDKNDKNDKNDGKNNNKGNDKNNNRGNDKNNDKKNNRDNDKNNDKNNDKKNNKDNNNKKKKNGKEQNEDSTESDDESSVIDDNYIDDDSCDCDSESDSIDYDTSFNSESNYDDNSFIDMSDNDNTLNYIKNYETTYNALDIFMKDIDKINKNREELNNILPIKKSLDNYVLPNIITQKVLPPVILPLNKQMTNLFYELRYRDFFHIEKIDYYKLFTMQKGISNIYMKKFLMNNEDMSFNSITNGIETYNYTNENIVINHKNNNGKIELYIPNFWRSIKSVNEIKSLTGNYYDFYYKVLVHPRGNSNDDNYMSAYLEVIKQDFYPSEWVFPNVHFQLTVHNFKNRKNSISSASCWSFTNNSLSRGWQKMISHSKINKVSGFLDESGGLLIKGKVEITFKQLWSKSVQYSPKYIWSYMPEKLYAHFQQEDPLLNFLFKKSYFKNILHKNEKHNNYNSSINDLKKNDNNKSNNYYINKNSNCDKNKNIDRMKKMSYYNMNYLYNRYTLDIYNYSLYWSPQLVKSYFGNVDHKKKCNKSLANNTNNVIQNDMNKEEKVLDIISDSYSNMHVYDLLIKRKNLNELKKFSKGGNLQNEQKGDEDVKKEDVKKENVNKEEIKNGNNNNNNDENENEVDDNTVSTTDYLTLDDRKHVLTLTNYIVPIVESFHDNDNLTILVNTLYNIDLFKIIVLKYNGNLYNRILMKYIKKKRKEKRYKLEYVMKKYGIEKHFTKNEVIQKIKEYNENKIDNYDDCIKWKNTLIQKLQIISERIKYLYTYMNDKINNMNNINYKSYFQLCNSNEIPNIQFINVIDIQKEEIIINGITRINNYINYLNVWIQNVNDCINYVTNCGYNFNYLSNLNKVKININDLNNNIVDVNNSIHNIEKEDIFKSLSYPKDHSTTFEGIHNNMSHKETSSIQNKGKEKSNNNIKSDDNNNNNDNYCVGDYLEFLEYDFIDNPDELKRIPYRYSSDFKSFHMFEYFRKNNNNVIVSLQRIFICMQLYSLVLCAKKKKDHFEKYTSDVNLNELYYNEKDNFHDNMNKFKGKNNKYNKKQEYYNQNNYDCGVKNSYSSSLSTAVETLTANGIKEAKDDDLNKSSLNKKKCHDKDNNDQPHYVSTNSSNSDDDDDDGDNNNNKNDNMDDDSYYERNSIFGDNNDDKDDDDDDSYLDNFSDSDGKKNDPSYKYDIENNEEMKFYKDLELRKKNCLYYYRNALFYNGSSMIPCEENKHFTIPLKGIDNNGANPENFDDGTENMCSFLNMFSKNDNYLNLFKPLIPNIKILLFSLNKILFNKHRCNEPIRKIHEELFKRIVCDVARDKIKLNRKIKKLKKQNNKGDIINDLINDLKELRFFEKICYELFKLKSKNYSDDEDSNNRMEESEYSENSNDLSYDEFDSKISKYPTKVGNEGKKSKDNNNNNNNNMMGDDDNKVNKNEEGNEQNESAQIKEGKEKKLRDFIQKEDIRNEDNESYEYYNDQGTENLDDMNSDEYMNNNNNNNNNNNNNIKRLDDSYNKLLKNKNINSLIYNLVSKLKMDFYKNYIICDKDIFKTIGRLCFSEIPYVLFLYMDCYKSLGRGDLVDIPLYLDVFEENEEMEDDSKGEKNLVYSIRRNNMRNKGDGSSKEKITYHLYALVISQNKNPNNNLFIPSYNKVNDMEFNIGNDCNLNSSSYLILKPQINGPWYQIYKNRITQLKQATDFNEWKCHRDFYCSCCIYVSDNYFEMQNHFFLQQFNIKDINFPLYVHTLKEFEIEEEDIFEFDRNNKNDDMYSSSVNNGLEENYVDELIYELRKFSLDKSEKKLNEQKDGNGVPKSSNDKLVSYIEEEKYSSHFKKVFEKNNLYKLVDDINEKYNVKYYGSSKTKIFSKKKNVPMNIKEGTFPYIKTEHDIIYNCLQAHHRLMINVKEELIDDVIKVNNNNNICYNFNNHHKSAVCIVLNNHNTLREDKRRHFFDLKNIIKNYEKFDMNNLNIYNSNIKLMKFSDNFSTGLIITKNMPLFYSNITLKNIINVRNNSIIDSDNERKHLIHKIGEDHHHNNNSNNNVEGNISKVYCKKELKGIISSNETNDTNHTNRTNRTNEMKEENGLSDIRNYEQNDNITTTNTNDKKLDVVDNISETNDLNLIRKNGDINKCIEKGNGGGKGRLNVMNNNIQKCKNKYNTKKECRNLNILHCNTNNIIINRNDMNYVKYIMQLENFLKGMNFNNKFFFNMNNVKDPIRDPFHLEINNVFYNFFEVKMNMNNIKKNYINNQEKSELHSYYIKTCLNIFKSFFHEYFYLSFINKMEIKKKKKNAFKNFCIALSDIFFTNLSFKSEEDDDNFEHLQGGIIIYEFYEKRFKKLKLILKKIFMYLNIICMIIKYIKLKKWIFNENFDMHTCKMHDTFFFNFLYFFYNKYSKNCKNNYIKKLCQKSAVKKKQIINGIKKNMNTVKDEDFYFLEFYDKLFVKREPLMQEHLSNKLDKLLTYCTCIISTNETQIINPKIYKKKKALFFERTQHNIDCVFRYFSSSLHDEILYLSKRRNDFNERKKYKEQDKIASEKEDQIYSIHGNNMNNQDRMYLYIEENFNSIEETNPKRMEYFLLNLLKNNEKKRKTCVLCYCVRRYYMNFLNKLEKKLTHDFIEKQINFIFDNNYLEITKLYRRTKNNLLDPNCNCPSLFNYINIDTVEACIIYLLQTMWKFYISYILSIPNELEQYYENLAKKHKRKKYKNSKDEKGWNFIKFLKEEKTNNLINKYISFNDDSDVISTNDEENVDRSDDSESNDDKKYSKKKQSNLLLSNFDFVDISSIEKLTSGNSSSKNSKKNSNNESIQMDNTNNSNSNNNNKNDNNNDNNNDNNNSFCYYCADELNVKNGKILDTNKNIESNDKSYKNQNIQSNEQSVTPNRNIEENKDHEKKSNNSFYNINLDILKQDDLFYKCTNEHLGNATAVLNILQKKLENEELKKLMKLFHFRGFTEKIPNEECSKKKCIKNKNVHKNKDDVIVSAHKEKNVKTDSSDDKKKKEDNENNNKNKNNIIHNSTNNNVLKENIHNITQNEYIKNDLKNILSKDNLRNEDPSDILENNLESVFNGTHVDQKFISNFYANLKIFKDCLDKNELTKGNNSKDNNNNNNNNNNNNNNKNNMGQENVLMSTIHKVNETMKKYNINNINEIKSVLIKNGYDIRKCYNGIDLIFLFLSKIKGANVNFINGNNFESNKNMYEILLSNFKSLNYEKIEKEYYSLDYILGNFEYIDENYIEERYASFFNYMDVIFTTQNMIDDSDIITQDIFNPFIDIMNNLFCYGIGLIDNNNNMNSSSNNNNKINSNNSHSNNKNNNNKNKNNNNSNNNNNNNNSNNNSNNNNSNNNNNNNNNNNNNNNNVNKEIIKLNSLYSFLDNLHKCVGSLLIIDKSYDCKKELFSFIQYNSFFWYILYKQYNMFLTYYDMTNHCNFFNIFLFHFFNYTFNFPMDNFFQLDNKLSFEKEQIVNHLFTKFPFLKEEEKSLFHIIMRFLLQEKNHFYNYYYSNELSLFIFNAIMSLNNFYLNMKEPNIFSKDYTKLNDYNFVLNMKEVYDIQPAVINKKSKCEESSNKIYNVCKSSNNNEEIKSVENDKNGGNSYFDNFILNKENILDILEKKNEKEIYEIGKVFDFHIKNESIYFKKRINMLDFVMNDYKKENFVNYSNSDINNKIFYVAYNYPIININNKNNDLFSIYLRTIYKCNEHFRNLNHVFFIYSNYFYNFHNLFLFFNKDNDLFNSLFKLRFKIDQAKQMDNFYYDMEDKNNNTYMNKEYVQIKKKNENENNITFSNPIGNYKNYEYAIHNSKSDIFYIFDDIVYDITESVNMDYYFKGNRAYVNFVKNKMYGDDNKEDDYIQYDEISINEANQNKRKQQIDSSNNNNNVVVNNDDNDNDNMCSNNNYYYNNIYNNDNLCYNRNSIQFDDYMDETILSELINNKETDGLNADSSNLGPYNMNNVKNKNNNNNNSNNKRKKNEKNEKIDKIEQFLHESELEKDIMNITFNEKEFLGKDLSFNFYFRSIMYYNKDIIASNNLEYLMKDKNFITGNVGKKYFFISLLFNIDYYNVRGMNIGNKVVSNRTMFINKILRDNKGKVLNLKVFHIYNIFSKIIELYYERKRKGHNMMSLKNSKIASTNGNNNNNNNNNNNNNNNNSKSNLKDEDNTINLFDYKTDEDFYYKVKMNPSYFFLLYAIKKDYDKRNKNKLIFMNVNSDLEAYIEDKKDNNIYNRFDLNILLVPISSQIVLSKFNGNLNMFNDNDYPLITFKYLTSTYELICIGIILCSSKLLLQDYILNWFFPKLKERRLVKDDVDLKIDDIYVYEESELYCLEKIRKVSCNIKKLLKKYSNTIVIQLKKTNMNNSNIDKINLKCVEYSKLNKYNFCSKCRNNYICICEKIEREQLRKKVSLIKQEEQLYRYFKIYNNNMNMNNNNSNNNNNNNNDDLLNMLNNDKEAKKILVLMEKMKDLKKAQNIKAQEKKINKNINSTNTQNVENDNNKKLESKKEKEKLLFNIYETPNFVQELEAIENSCRSSNSSMLSLSSDNISSYSSDDNLFVDEIDSGSYTFNNIVIPNMVSVKDEENETQEKTNSSDLKKSQKVNIIKKGNGVKNDMEDIMLKEFHKLSKQRISNIYNLQQSVQLSQENVNNNNMVLNFIKAQENMKNKNMIKDAKKDSKKIPVDVLKDKKGKTSNKEELEKEKEKEEHKLKEQQTVQEDQKVKDNKKIKDNQKVKDNKKIKDNQKVKDNKKIKQDNIEKTKNDKEEPIQINENTKQSNIKIVSLTKSQESLTDNKKTNADNEKQLTVNKIVPKIENKKTEPAVDVKGKVEKSKLSKDKSVIVPEVKKEIINNSVIMNNDGSNNENKNKENKNKSSEKSKAKDNNNNKKDNNNNNNNKKDNNNNNNKKDNNNSNNNNNNNNLSNNGEEDPNDSDSDKDKKKKNKKKDNKNINDDSDDNNKNKKKLKNNIKNSDDIINNYFSKNVIEYIEKNDKLENIATYIYNELIEITKKKIKKNVIRLDNLSADNYLTIGEEFLNVMKEILLKIYYKYNEDDYRKHYLRMNNNENDNNNNNKISLKKKSETEASNKNVESNDNVDGKLENEYNEDETYMNKFNLCDDEHVIKFLNLIKRKLIYKILFPDIQIDTKSKGRNKKNVKKKKQVDIKYVYDIFKREYIFYDKILIMIQHILDINIRTNIFLFVYLFAGKLISFVDFDYILNNTIFYNDYVYYNKVAFEDTFFQEESLEESNKKYYNMNDSINMPLPDSPTTTSNSNNNNNNNNSNNNNNNNNYDKGEVKGLRTSSEQLLNSLNNEGNNNKLKEDNVMINEENNVNEDIEKKKKKKSIEEEGSGDDVLINVNMSKIIYILILISNKRIMKELIEEKYREELNEYYYFEMNKKYYDILCNEYNKILNENYAKDLSEHYVKDELFFESLNIIELLNNKEYISTLTDTNKYIKDENKKLNKTHVDDNELIINEYEFMNEKNINKYINIHNIIKFKLNFKIAIKKINILQDKIFINNNDNISSGISFYSLIFKYNSNLINTLHTDIMKTTQNNNMSIPNMTNYNNYLQVSKKDIDKLKGIYNKYVVLNNKPNVLKDMYILNSEINTLLSVLYNDINYNNMMNNTYNNILGDTHISAQNGGYLRAGSNNLSNNKMNNQGGNHINVKRVLTNNLNMNNMNNNNNNNNNNNNNNNNNNNNNNNNNNNNNNNNNNNNIYINEGGTINMKDLKLNLSKVIGTNPDIQNEINNNSNHDKKSILKNSSTYSSIYDNNTPTIINKNNNNLKTSVGLNSPTSNRNKKSVTTFDSKVTLSASYNSNEINNMNEDSKLRRLSDQPLSAKSSKIVTPPGNNMNNNTNNVINNTNNVPNNTNNIINNNVATNKYIKKSKFKRVYNKDIPYICNEGKTWMVIYKPAYYHCSAYTSHNRYNFLVNINKYSDYFYNILEKICMKCKIKTKFMCITCKDMENICSKCENIVSKFCKKCNLLIKKNRDVLKIINSISLNDVVFSGRVESFHLFMMKSFPHLETVKKWHKLECGLCHRIDLETSGSLIIAKTKEAREFLFDQFRKRNVYKEYILLCHGRIKKKKGFINKSIQTHEYNNFHSKSHFSLVVKTGGTDAYTEYNCVKVYKLKRKIEDIIQEVQDGKYNCNSTVKKDINKEIYCNDYYKFLNNNKKNVNIIQRYVIITNILSNHDNITKKKDTSNNLMTQEDYSSFVQRKNSHIITNYFSDSQILEDKKKIKKKISSTHNNKTLNIKGINHILHDDTHYNLNGNINSRGSYINKNDFTNNMNNNMNNMNNMNTSTLGIYTSGAPSIKKEVCHHLCFRCNSISEDYFLTDPKEIENYTKEFTLCNVKIHTGRTHQIRVHMRHIGHPLVSDKKYLNPSLSNLDKFWCFRMFLHSLILEFNNPDYYFFNLNDDMKKKKKMYSSNLYRMPDRTVKAICPLAGDLQTVLDNELEISESLEDENSYINRILKMNINDKRNEAMKNARPIIEDDKFVKHASMDSSKIIHSAREETNDKEKISTQAKIIEVGKKLTTKDEDMLHSKKTDVIQHGDEEEDDEEDDEEDDEEDEEEEEEDEDEEDVEDVEDIEDVEDVEDIEDNYVDDDQYEDNYDDDNDNDDDDEYDHDYDEHINEEEQEDDDKKNNVNINDSYEEGEEEGDGKLNTKIKKDKKSTENNISVVEEKVKSIDINKEEDFPDLLSNSKKKNHKDKRNASKNKNKNKDILKKNENNINDEKEKKSSNVITKNNKEQNEIIDNKNEHVDNKNEIIDNKNEIIVNKNEIIVNKNEIIVNKNEIIDNKNEHIDNKNLLNGSLDEYNNFKEKNLLSKENLKINDTTTITTSVEIPNDEHIKKILLKKPTNKILRKLNYDDFFTNKKKKDMNKENMKKTDEQKIKEEIKQTQDEEDTYLDLIDNEIKKRLRTNFNLLVKEAKIVINNIIRNSFVFKILFYFFKLKKTLLYLLKCFGIEQIKKEKKVYVEMNILDEFVNNMNENKENMPIDFLYELIHSITYFYKNMHVKKTRKKKEIIIYTLKKHLKNIKSNSNISKTKRSLIFQRFYNILFNLNYALNKYGLKTNENLKNQIMKKSKNVYLKITNVFTIIMNILNSKVYMKDIHIKKLMENKAVFSLNTIEQFLLLHKINNETGGEGTNNDKEKKRQTKVSNTQGYNKDNINNKEKETNKNEEQQQGEAEGKREGEGEEGEGGEEEECNYLIEQINKIFFKVDKNNEHMLNGVLLENDDDYLDEEGKVSKKKMKKKKLLNDKEHEKDNEDNDEDNDEDDDDEDDDEDDEDDDDDDDDDDDDDDDDDYDEDYDEDYDEKLVENKKNERSNIIMSKENMNKLNMQPKNTNNRSSSSNTIDMKKKIYEKNCMKEKEYRTHDLITNESIMYKNNEIYDKEKYRRNQENINHMSSNYMDKNINHHHEYDNMKKKNYSNNNIYNNNSSNKVSMDEEKRKNLDNNTYPYPMYENVKEIEKNKVQQNLFHISKENNNNNNDSTNNNSVYDYNMSNSNYGSKMGSNNINDSTNYYNMREKNIYNILCNNDSNNYVLFNSNEKYSMNNKISNSILSNMIMNKQDNNNININQNNNNNNNNNMNEGGSETLYSSFTKEIEKLKKEVRKCEESYDKEMVEIQNTKKEIKYLRENNKNDELNNIFSELNLENISKYLLSAYEKYGLNVFIKVLVYKNDLGHINDHIKKQDDVNMEFFINISVDKIFDYLLLKKNIITMVNIKKLKEKFIQGQKIYELVKNETNKMIIENIKEYNFIFILWKHNNMNDLYERKQVIFNFIIKIIDKIIPKYIINEYIIIRKNEIYEIMINSLNKKNEYEKKNKDISSSQYLEKENTYNNLYKKIKDEKRIVDNYSIEMHAEKNITNPIYMSQREDNSTPNSKKNCSNTNHIMSINHSNMNNTKNTNNHNNNNNNNNYVVNHTTHSTSFYYLHNEKPSNVNTDNQKEIKDDNVHMKFQSLPENIRIGVFKNDVNKFYEIYKMMNAGNDLNSLMYKNSGHIKNKVNNEPYSNNYKRNTFCTNDINFAASAQQSFMNKNVINSMNNNMVSSNNMISSNNIISNNNMISSNNMISSNNMINSNNMISSNNMISNNMMNNKMNSSNVQIDTEKTRTMNNLQDQFLNLQKNGSHIYLRNTKDSKNSDIFTFKNNVRSPSQHITLNEGKENGIDMKKKIEQEEDKKKIINNNNNNINSNNNINSNNNINSNNNMNDEDLIKKEINMNTNDYEENEKRSSQNKTNYFDNIINNSYINNKMNNFMIEKKEELNNDMINTFTNKREINIQTEKAKEQNIKEPYEVKETNHNKGIIHMYYDNEKDINNITSASGNRHNNIERDKNNIQTNKTSNNFVKSFKNTISEMFYKKKLNKNTEIKDEPNQNNDTMIYNNLQDMSKKVDEYNENKNYNHNIVHNNALKSNQMDNEEKKKIELPHNNNNNNNNSNERKDLLNNPMSVNMQNAQNVQNTNRSHEYLINSNISLPNFVDENTCSNLKEKQFESFEKNQMDMTNPNMMMFNIMLGNNLDGIIPNYMEEKHNKNMNKNVNNKNSVSLSSSMINNGNVINNRMHTKTINNNSNTCVPNIKYPNFFINKNNIPYTNENNKSLSESNLMNLVCELNNIEKVENLSMQNNLNNNINNKRSTLSQMNLLNMENTKGNEQHMRTDLHHNINNNIFLSNNLCDNKIVNQMFLKKYYNSNFVHYDEENEEKNKLGTIPRHNTTTTNNNNNDNNNNSNNNMHLFYNFNGNTPSDINNSYCQQKKIMSSSIIMNNKENNNLHFLNNTYDINGSYATSSIINNNMNRNNSNSVNSNYLNKTFSIMDPRNNINEYEEKQKIIINRIKQQNISNTSGNMKNSSNIRSSSNIRSSNNIKSSSNIKSSSNINANNNILYQLIDENILKNTLSNNNPFNEIKNNTQKTNMDFGLNQLSMYMQNNVTSNLKNNSITNETHNNNDNMKTNHNNNNNNNNNNNNNNNNNTSGYPINYLIFQQNQNHSDTNNNNNNNNKNNSNNNNNNIY.

Disordered stretches follow at residues 166-210, 244-471, and 1004-1170; these read DMDN…EKKN, NNSD…NDIN, and DDQK…DTSF. Positions 169–179 are enriched in polar residues; that stretch reads NNPNNHVSNNG. Over residues 193-205 the composition is skewed to low complexity; it reads TSNSIHKNNNTNI. Over residues 270-282 the composition is skewed to basic and acidic residues; that stretch reads KKSDNNNDKKNDD. The span at 285–320 shows a compositional bias: low complexity; it reads NNNNNNNNNNNNNNNNNDNHVCTSNNQPNTINKQNN. Residues 328–338 show a composition bias toward polar residues; sequence DQNGRTKITPQ. The stretch at 338 to 366 forms a coiled coil; that stretch reads QNVNQKEKEIKNVVKEKNNFNREEKDITN. The span at 342-365 shows a compositional bias: basic and acidic residues; the sequence is QKEKEIKNVVKEKNNFNREEKDIT. The span at 366 to 375 shows a compositional bias: acidic residues; that stretch reads NSDDYDENST. Polar residues-rich tracts occupy residues 376 to 389 and 421 to 437; these read DESC…TSSE and VPSN…SAEN. Residues 431-469 are a coiled coil; it reads NVKSAENCNKEKKKKKKKKKKELNNDNKDNTLNNETMND. The span at 441-451 shows a compositional bias: basic residues; that stretch reads EKKKKKKKKKK. Residues 460-471 are compositionally biased toward low complexity; the sequence is NTLNNETMNDIN. A compositionally biased stretch (basic and acidic residues) spans 1025 to 1037; that stretch reads NEEKPNVNKEGNI. Positions 1047–1057 are enriched in low complexity; it reads NKNKNNNNNNN. Residues 1058-1132 are compositionally biased toward basic and acidic residues; the sequence is DKNDKNDKND…KKKKNGKEQN (75 aa). The segment covering 1133–1165 has biased composition (acidic residues); that stretch reads EDSTESDDESSVIDDNYIDDDSCDCDSESDSID. The region spanning 1328 to 1458 is the MATH domain; the sequence is NGKIELYIPN…SGGLLIKGKV (131 aa). A disordered region spans residues 1651 to 1698; sequence GGNLQNEQKGDEDVKKEDVKKENVNKEEIKNGNNNNNNDENENEVDDN. A compositionally biased stretch (basic and acidic residues) spans 1658–1680; the sequence is QKGDEDVKKEDVKKENVNKEEIK. Residues 1916 to 1948 adopt a coiled-coil conformation; sequence NYLSNLNKVKININDLNNNIVDVNNSIHNIEKE. Basic and acidic residues predominate over residues 1973 to 1995; sequence HKETSSIQNKGKEKSNNNIKSDD. Disordered stretches follow at residues 1973 to 1998, 2155 to 2245, 2427 to 2566, and 3120 to 3139; these read HKET…DNNN, LNKS…PSYK, YSDD…NNIK, and SNET…NEMK. The span at 2216-2228 shows a compositional bias: acidic residues; sequence NNDDKDDDDDDSY. Residues 2235-2245 are compositionally biased toward basic and acidic residues; sequence SDGKKNDPSYK. Low complexity predominate over residues 2475 to 2484; sequence NNNNNNNNMM. Basic and acidic residues-rich tracts occupy residues 2487–2496 and 2505–2527; these read DDNKVNKNEE and QIKE…RNED. 2 stretches are compositionally biased toward low complexity: residues 2552–2564 and 3121–3133; these read NNNN…NNNN and NETN…NRTN. Residues 2555–2580 are a coiled coil; the sequence is NNNNNNNNNNIKRLDDSYNKLLKNKN. The chain crosses the membrane as a helical span at residues 3398–3418; the sequence is KLILKKIFMYLNIICMIIKYI. 3 disordered regions span residues 3802–3826, 3847–3890, and 3919–3953; these read STND…YSKK, LTSG…DNNN, and ESND…EKKS. Residues 3809–3822 show a composition bias toward basic and acidic residues; it reads VDRSDDSESNDDKK. Residues 3851-3890 show a composition bias toward low complexity; sequence NSSSKNSKKNSNNESIQMDNTNNSNSNNNNKNDNNNDNNN. Polar residues predominate over residues 3926 to 3941; that stretch reads KNQNIQSNEQSVTPNR. Basic and acidic residues predominate over residues 3942–3953; the sequence is NIEENKDHEKKS. Residues 3977–4001 adopt a coiled-coil conformation; sequence EHLGNATAVLNILQKKLENEELKKL. The span at 4039 to 4065 shows a compositional bias: basic and acidic residues; it reads VSAHKEKNVKTDSSDDKKKKEDNENNN. 6 disordered regions span residues 4039–4074, 4155–4180, 4352–4414, 4919–4943, 4991–5030, and 5179–5207; these read VSAH…IIHN, KGNN…NNMG, SNNN…NNNN, NKRK…DNDN, DGLN…KNEK, and SKIA…KSNL. Low complexity predominate over residues 4157–4178; it reads NNSKDNNNNNNNNNNNNNNKNN. Positions 4399-4424 form a coiled coil; it reads NNNNNNNNNNNNNNNNVNKEIIKLNS. Low complexity-rich tracts occupy residues 4929–4943, 5004–5019, and 5185–5202; these read NNNN…DNDN, NMNN…NNSN, and NGNN…NNNN. A coiled-coil region spans residues 5006-5046; the sequence is NNVKNKNNNNNNSNNKRKKNEKNEKIDKIEQFLHESELEKD. Coiled-coil stretches lie at residues 5486 to 5563, 5728 to 5810, and 5900 to 6022; these read NNNN…NIYE, DVLK…DKEE, and MNND…INNY. 3 stretches are compositionally biased toward basic and acidic residues: residues 5716 to 5732, 5738 to 5811, and 5909 to 5953; these read KDAK…VLKD, SNKE…KEEP, and NKNK…KKDN. 7 disordered regions span residues 5716 to 5816, 5892 to 6009, 6123 to 6142, 6299 to 6338, 6722 to 6760, 7585 to 7730, and 7744 to 7787; these read KDAK…QINE, EIIN…KKLK, KSET…VDGK, NDSI…DKGE, NMNN…NNNI, EDML…VEEK, and DLLS…KKSS. The span at 5954–5968 shows a compositional bias: low complexity; that stretch reads NNSNNNNNNNNLSNN. Residues 5969–5978 are compositionally biased toward acidic residues; it reads GEEDPNDSDS. A compositionally biased stretch (basic and acidic residues) spans 5991–6003; it reads NKNINDDSDDNNK. Positions 6129-6138 are enriched in polar residues; that stretch reads SNKNVESNDN. 2 stretches are compositionally biased toward low complexity: residues 6314 to 6333 and 6722 to 6759; these read SNSN…NNNN and NMNN…NNNN. Residues 6719 to 6743 are a coiled coil; it reads NMNNMNNNNNNNNNNNNNNNNNNNN. The segment covering 7585 to 7599 has biased composition (basic and acidic residues); it reads EDMLHSKKTDVIQHG. A compositionally biased stretch (acidic residues) spans 7600-7685; sequence DEEEDDEEDD…EHINEEEQED (86 aa). 4 coiled-coil regions span residues 7601–7637, 7710–7813, 7934–7961, and 8217–8241; these read EEED…DIED, NTKI…NKNE, KTDE…IDNE, and NINN…GKRE. Basic residues predominate over residues 7749–7765; that stretch reads SKKKNHKDKRNASKNKN. Residues 7766–7786 show a composition bias toward basic and acidic residues; it reads KNKDILKKNENNINDEKEKKS. 3 disordered regions span residues 8189 to 8252, 8293 to 8380, and 8474 to 8497; these read ETGG…GGEE, GKVS…IIMS, and KKKN…MDEE. Positions 8218-8242 are enriched in basic and acidic residues; the sequence is INNKEKETNKNEEQQQGEAEGKREG. A compositionally biased stretch (acidic residues) spans 8243–8252; it reads EGEEGEGGEE. Residues 8305 to 8314 are compositionally biased toward basic and acidic residues; sequence LLNDKEHEKD. A compositionally biased stretch (acidic residues) spans 8315-8363; that stretch reads NEDNDEDNDEDDDDEDDDEDDEDDDDDDDDDDDDDDDDDYDEDYDEDYD. A compositionally biased stretch (basic and acidic residues) spans 8364–8374; the sequence is EKLVENKKNER. The span at 8478–8492 shows a compositional bias: low complexity; that stretch reads YSNNNIYNNNSSNKV. 3 coiled-coil regions span residues 8644 to 8697, 8882 to 8907, and 9219 to 9247; these read SETL…ELNN, QYLE…VDNY, and IDMK…SNNN. Disordered stretches follow at residues 9759 to 9779, 9891 to 9926, and 9985 to 10061; these read TIPR…NNNS, SNTS…SSSN, and KNNS…NNIY. Composition is skewed to low complexity over residues 9764 to 9779, 9899 to 9926, and 9986 to 10022; these read NTTT…NNNS, NSSN…SSSN, and NNSI…NNNT. The span at 10031–10041 shows a compositional bias: polar residues; it reads IFQQNQNHSDT. Low complexity predominate over residues 10042-10061; it reads NNNNNNNNKNNSNNNNNNIY.

The protein localises to the membrane. The protein is MATH and LRR domain-containing protein PFE0570w of Plasmodium falciparum (isolate 3D7).